Consider the following 1829-residue polypeptide: MNEGEVVLTPEQIQTLRGYASRGDTYGGWRYLANLGDRYADDAAAIVGKDANLNGLNLWMKKGVENLWDDTVGKKTRLEKFDRVALQHFRQYARLINQNNGRLPNTSEIERSYYKAVTDNGVSSSAAIDLVINRSLPDMADGYWALGLGIEAERIHNEQAVNNPNGSERDNRKQLISALDKGFDGSFKEKHFTFLQSVMMDVTKLGVEYTIDGWQKIGGWGNGIINDLYKSVVKREWTGIFEIVNNNIKQGNEAFKNEINSLVHDMKAAGKEFGDDLNTQWNNLTQAAEIIYNDIVDNTSQGIEKGVKAIKELSEKMKNAASDLADGSAEKAKQVVEDLAQAAKEAYENAKSTAEKAAQAAREFFKGLPSFKDLAEKFRDLFPNPEGWIDDGHQCLAPWVKETKKRNGKYHVYDPLALDLDGDGIETVATKGFAGSLFDHTNNGIRTATGWVSADDGLLVRDLNGNGIIDNGAELFGDNTKLADGSFAKHGYAALAELDSNGDNIINAADAAFQTLRVWQDLNQDGISQANELRTLEELGIQSLDLAYKDVNKNLGNGNTLAQQGSYTKTDGTTAKMGDLLLAADNLHSRFKDKVELTAEQAKAANLAGIGRLRDLREAAALSGDLANMLKAYSAAETKEAQLALLDNLIHKWAETDSNWGKKSPMRLSTDWTQTANEGIALTPSQVAQLKKNALVSLSDKAKAAIDAARDRIAVLDAYTGQDSNTLYYMSEEDALNIVKVTNDTYDHLAKNIYQNLLFQTRLQPYLNQISFKMENDTFTLDFSGLVQAFNHVKETNPQKAFVDLAEMLAYGELRSWYEGRRLMTDYVEEAKKAGKFEDYQKVLGQETVALLAKTSGTQADDILQNVGFGHNKNVSLYGNDGNDTLIGGAGNDYLEGGSGSDTYVFGEGFGQDTVYNYDYATGRKDIIRFTDGITADMLTFTREGNHLLIKAKDGSGQVTVQSYFQNDGSGAYRIDEIHFDNGKVLDVATVKELVQQSTDGSDRLYAYQSGNTLNGGLGDDYLYGADGDDLLNGDAGNDSIYSGNGNDTLDGGEGNDALYGYNGNDALNGGEGNDHLNGEDGNDTLIGGAGNDYLEGGSGSDTYVFGKGFGQDTVYNYDYATGRKDIIRFTDGITADMLTFTREGNHLLIKAKDGSGQVTVQYYFQNDGSGAYRIDEIHFDNGKVLDVATVKELVQQSTDGSDRLYAYQSGNTLNGGLGDDYLYGADGDDLLNGDAGNDSIYSGNGNDTLDGGEGNDALYGYNGNDALNGGEGNDHLNGEDGNDTLIGGAGNDYLEGGSGSDTYVFGKGFGQDAVYNYDYATGRKDIIRFTDGITADMLTFTREGNHLLIKAKDGSGQVTVQSYFQNDGSGAYRIDEIHFDNGKVLDVATVKELVQQSTDGSDRLYAYQSGNTLNGGLGDDYLYGADGDDLLNGDAGNDSIYSGNGNDTLNGGEGNDALYGYNGNDALNGGEGNDHLNGEDGNDTLIGGAGNDYLEGGSGSDTYVFGKGFGQDAVYNYDYATGRKDIIRFTDGITADMLTFTREGNHLLIKAKDGSGQVTVQSYFQNDGSGAYRIDEIHFDNGKVLDVATVKELVQQSTDGSDRLYAYQSGSTLNGGLGDDYLYGADGDDLLNGDAGNDSIYSGNGNDTLDGGEGNDALYGYNGNDALNGGEGNDHLNGEDGNDTLIGGAGNDYLEGGSGSDTYVFGEGFGQDTVYNYHVDKNSDTMHFKGFKAADVHFIRSGSDLVLSASEQDNVRISGFFYGENHRVDTFVFDDAAISNPDFAKYINAGNNLVQSMSVFGSNTAATGGNVDANIQSVQQPLLVTPSA.

22 Hemolysin-type calcium-binding repeats span residues 869–886 (FGHN…NDTL), 887–904 (IGGA…SDTY), 1015–1032 (NGGL…DDLL), 1033–1050 (NGDA…NDTL), 1051–1068 (DGGE…NDAL), 1069–1086 (NGGE…NDTL), 1087–1104 (IGGA…SDTY), 1215–1232 (NGGL…DDLL), 1233–1250 (NGDA…NDTL), 1251–1268 (DGGE…NDAL), 1269–1286 (NGGE…NDTL), 1287–1304 (IGGA…SDTY), 1415–1432 (NGGL…DDLL), 1433–1450 (NGDA…NDTL), 1451–1468 (NGGE…NDAL), 1469–1486 (NGGE…NDTL), 1487–1504 (IGGA…SDTY), 1615–1632 (NGGL…DDLL), 1633–1650 (NGDA…NDTL), 1651–1668 (DGGE…NDAL), 1669–1686 (NGGE…NDTL), and 1687–1704 (IGGA…SDTY). Residues 1671–1690 (GEGNDHLNGEDGNDTLIGGA) form a disordered region.

It belongs to the RTX prokaryotic toxin (TC 1.C.11) family.

It is found in the cell outer membrane. The protein localises to the secreted. Functionally, may participate in the pathogenesis of meningococcal disease. This chain is Iron-regulated protein FrpC (frpC), found in Neisseria meningitidis serogroup B (strain ATCC BAA-335 / MC58).